The chain runs to 179 residues: Crossover junction endodeoxyribonuclease RuvC (179 aa).

Active-site residues include Asp-7, Glu-67, and Asp-140. Mg(2+) is bound by residues Asp-7, Glu-67, and Asp-140.

It belongs to the RuvC family. Homodimer which binds Holliday junction (HJ) DNA. The HJ becomes 2-fold symmetrical on binding to RuvC with unstacked arms; it has a different conformation from HJ DNA in complex with RuvA. In the full resolvosome a probable DNA-RuvA(4)-RuvB(12)-RuvC(2) complex forms which resolves the HJ. Requires Mg(2+) as cofactor.

It localises to the cytoplasm. The enzyme catalyses Endonucleolytic cleavage at a junction such as a reciprocal single-stranded crossover between two homologous DNA duplexes (Holliday junction).. The RuvA-RuvB-RuvC complex processes Holliday junction (HJ) DNA during genetic recombination and DNA repair. Endonuclease that resolves HJ intermediates. Cleaves cruciform DNA by making single-stranded nicks across the HJ at symmetrical positions within the homologous arms, yielding a 5'-phosphate and a 3'-hydroxyl group; requires a central core of homology in the junction. The consensus cleavage sequence is 5'-(A/T)TT(C/G)-3'. Cleavage occurs on the 3'-side of the TT dinucleotide at the point of strand exchange. HJ branch migration catalyzed by RuvA-RuvB allows RuvC to scan DNA until it finds its consensus sequence, where it cleaves and resolves the cruciform DNA. The protein is Crossover junction endodeoxyribonuclease RuvC of Salinibacter ruber (strain DSM 13855 / M31).